The primary structure comprises 149 residues: Nucleoside diphosphate kinase (149 aa).

6 residues coordinate ATP: K9, F57, R85, T91, R102, and N112. The active-site Pros-phosphohistidine intermediate is H115.

Belongs to the NDK family. It depends on Mg(2+) as a cofactor.

The protein resides in the cytoplasm. The enzyme catalyses a 2'-deoxyribonucleoside 5'-diphosphate + ATP = a 2'-deoxyribonucleoside 5'-triphosphate + ADP. It carries out the reaction a ribonucleoside 5'-diphosphate + ATP = a ribonucleoside 5'-triphosphate + ADP. Major role in the synthesis of nucleoside triphosphates other than ATP. The ATP gamma phosphate is transferred to the NDP beta phosphate via a ping-pong mechanism, using a phosphorylated active-site intermediate. This Methanosarcina mazei (strain ATCC BAA-159 / DSM 3647 / Goe1 / Go1 / JCM 11833 / OCM 88) (Methanosarcina frisia) protein is Nucleoside diphosphate kinase.